The sequence spans 473 residues: Biotin-dependent acetyl-/propionyl-coenzyme A carboxylase beta6 subunit (473 aa).

Residues 1-224 enclose the CoA carboxyltransferase N-terminal domain; it reads MTIMAPEAVG…QGHFDRSKAE (224 aa). A CoA carboxyltransferase C-terminal domain is found at 225 to 473; sequence AGDTDIHALL…RRGRHKNIPL (249 aa).

Belongs to the AccD/PCCB family. In terms of assembly, the biotin-dependent acyl-CoA carboxylase complex is composed of AccA3, which contains the biotin carboxylase (BC) and biotin carboxyl carrier protein (BCCP) domains, and AccD6, which contains the carboxyl transferase (CT) domain.

It catalyses the reaction N(6)-carboxybiotinyl-L-lysyl-[protein] + acetyl-CoA = N(6)-biotinyl-L-lysyl-[protein] + malonyl-CoA. The catalysed reaction is N(6)-carboxybiotinyl-L-lysyl-[protein] + propanoyl-CoA = methylmalonyl-CoA + N(6)-biotinyl-L-lysyl-[protein]. Its pathway is lipid metabolism; fatty acid biosynthesis. It functions in the pathway lipid metabolism; mycolic acid biosynthesis. Functionally, component of a biotin-dependent acyl-CoA carboxylase complex. This subunit transfers the CO2 from carboxybiotin to the CoA ester substrate. When associated with the alpha3 subunit AccA3, is involved in the carboxylation of acetyl-CoA and propionyl-CoA. The protein is Biotin-dependent acetyl-/propionyl-coenzyme A carboxylase beta6 subunit (accD6) of Mycobacterium bovis (strain ATCC BAA-935 / AF2122/97).